The primary structure comprises 487 residues: Cytochrome P450 2C21 (487 aa).

Residue cysteine 432 participates in heme binding.

This sequence belongs to the cytochrome P450 family. Heme is required as a cofactor. In terms of tissue distribution, liver.

The protein resides in the endoplasmic reticulum membrane. It is found in the microsome membrane. The catalysed reaction is an organic molecule + reduced [NADPH--hemoprotein reductase] + O2 = an alcohol + oxidized [NADPH--hemoprotein reductase] + H2O + H(+). Cytochromes P450 are a group of heme-thiolate monooxygenases. In liver microsomes, this enzyme is involved in an NADPH-dependent electron transport pathway. It oxidizes a variety of structurally unrelated compounds, including steroids, fatty acids, and xenobiotics. Showed testosterone hydrolase activity. The polypeptide is Cytochrome P450 2C21 (CYP2C21) (Canis lupus familiaris (Dog)).